Consider the following 346-residue polypeptide: Elongation factor Ts (346 aa).

An involved in Mg(2+) ion dislocation from EF-Tu region spans residues 80 to 83 (TDFV).

The protein belongs to the EF-Ts family.

It localises to the cytoplasm. Functionally, associates with the EF-Tu.GDP complex and induces the exchange of GDP to GTP. It remains bound to the aminoacyl-tRNA.EF-Tu.GTP complex up to the GTP hydrolysis stage on the ribosome. This Streptococcus pyogenes serotype M18 (strain MGAS8232) protein is Elongation factor Ts.